We begin with the raw amino-acid sequence, 285 residues long: Biotin synthase (285 aa).

The Radical SAM core domain occupies 2 to 223; it reads STRKQIFLCA…RRAHTLLGED (222 aa). [4Fe-4S] cluster contacts are provided by Cys-20, Cys-24, and Cys-27. Residues Cys-64, Cys-99, and Cys-157 each contribute to the [2Fe-2S] cluster site.

Belongs to the radical SAM superfamily. Biotin synthase family. Homodimer. [4Fe-4S] cluster is required as a cofactor. The cofactor is [2Fe-2S] cluster.

It carries out the reaction (4R,5S)-dethiobiotin + (sulfur carrier)-SH + 2 reduced [2Fe-2S]-[ferredoxin] + 2 S-adenosyl-L-methionine = (sulfur carrier)-H + biotin + 2 5'-deoxyadenosine + 2 L-methionine + 2 oxidized [2Fe-2S]-[ferredoxin]. It participates in cofactor biosynthesis; biotin biosynthesis; biotin from 7,8-diaminononanoate: step 2/2. Its function is as follows. Catalyzes the conversion of dethiobiotin (DTB) to biotin by the insertion of a sulfur atom into dethiobiotin via a radical-based mechanism. The sequence is that of Biotin synthase from Sulfurovum sp. (strain NBC37-1).